Reading from the N-terminus, the 137-residue chain is Small ribosomal subunit protein uS19 (137 aa).

Residues 115 to 137 are disordered; it reads RNRVSHGSAGVGATRSSKFVPLK.

Belongs to the universal ribosomal protein uS19 family.

Functionally, protein S19 forms a complex with S13 that binds strongly to the 16S ribosomal RNA. The polypeptide is Small ribosomal subunit protein uS19 (Methanococcoides burtonii (strain DSM 6242 / NBRC 107633 / OCM 468 / ACE-M)).